Here is a 1013-residue protein sequence, read N- to C-terminus: GTPase-activating protein BEM3 (1013 aa).

4 disordered regions span residues 90–197, 258–277, 282–301, and 307–421; these read TVVE…GSPA, GSRY…PESI, SDLQ…TDLG, and VDTT…HQSK. Over residues 143–160 the composition is skewed to polar residues; the sequence is QEATSGAQQVPLLTSSKS. Polar residues-rich tracts occupy residues 309-319, 333-388, and 404-418; these read TTFNAEDNPTG, TLQN…TSSN, and KSYS…SNSH. One can recognise a PH domain in the interval 555-662; that stretch reads EFAKEGMLLV…WISVLTTLCD (108 aa). Positions 702–726 are disordered; the sequence is AMDATSPTRPNDPNPVSLTSEEEKE. The segment covering 706 to 720 has biased composition (polar residues); that stretch reads TSPTRPNDPNPVSLT. Residues 799–1013 enclose the Rho-GAP domain; the sequence is LQLSSHPYQG…PPVNIHIPQI (215 aa).

It is found in the cytoplasm. Functionally, GTPase-activating protein (GAP) for CDC42 and less efficiently for RHO1. Negative regulator of the pheromone-response pathway through the STE20 protein kinase. In Eremothecium gossypii (strain ATCC 10895 / CBS 109.51 / FGSC 9923 / NRRL Y-1056) (Yeast), this protein is GTPase-activating protein BEM3 (BEM3).